A 99-amino-acid chain; its full sequence is MANLKYYDVILKPIVTEKSMNSMSEKKYSFSVHPEATKTQVKEAVEKMFAGTKVASVNTMNLEGKNRRRGNTSGKTSKTKKAIVQLTADSAEIEIFTGL.

It belongs to the universal ribosomal protein uL23 family. As to quaternary structure, part of the 50S ribosomal subunit. Contacts protein L29, and trigger factor when it is bound to the ribosome.

One of the early assembly proteins it binds 23S rRNA. One of the proteins that surrounds the polypeptide exit tunnel on the outside of the ribosome. Forms the main docking site for trigger factor binding to the ribosome. The sequence is that of Large ribosomal subunit protein uL23 from Lachnoclostridium phytofermentans (strain ATCC 700394 / DSM 18823 / ISDg) (Clostridium phytofermentans).